A 139-amino-acid polypeptide reads, in one-letter code: Nucleoside diphosphate kinase (139 aa).

K10, F58, R86, T92, R103, and N113 together coordinate ATP. Catalysis depends on H116, which acts as the Pros-phosphohistidine intermediate.

It belongs to the NDK family. In terms of assembly, homotetramer. Mg(2+) serves as cofactor.

The protein localises to the cytoplasm. The enzyme catalyses a 2'-deoxyribonucleoside 5'-diphosphate + ATP = a 2'-deoxyribonucleoside 5'-triphosphate + ADP. The catalysed reaction is a ribonucleoside 5'-diphosphate + ATP = a ribonucleoside 5'-triphosphate + ADP. Functionally, major role in the synthesis of nucleoside triphosphates other than ATP. The ATP gamma phosphate is transferred to the NDP beta phosphate via a ping-pong mechanism, using a phosphorylated active-site intermediate. This Caulobacter vibrioides (strain ATCC 19089 / CIP 103742 / CB 15) (Caulobacter crescentus) protein is Nucleoside diphosphate kinase.